A 134-amino-acid polypeptide reads, in one-letter code: MARVKRGVTAHAKHKKVLKAAKGFYGRRKNTIRAAKAAVDRSKQYAYRDRKVNKRNFRALWIQRINAAVREFGLTYGRFIDGLNKAGIEVDRKVLSDMAIHEPEAFGALVNAAKKALEYLKETGTANEFEGAVR.

Belongs to the bacterial ribosomal protein bL20 family.

Binds directly to 23S ribosomal RNA and is necessary for the in vitro assembly process of the 50S ribosomal subunit. It is not involved in the protein synthesizing functions of that subunit. This is Large ribosomal subunit protein bL20 from Rhizobium etli (strain CIAT 652).